The following is a 467-amino-acid chain: Glutamate--tRNA ligase 2 (467 aa).

The 'HIGH' region signature appears at proline 18–glycine 28. Residues proline 238–arginine 242 carry the 'KMSKS' region motif. Lysine 241 is a binding site for ATP.

It belongs to the class-I aminoacyl-tRNA synthetase family. Glutamate--tRNA ligase type 1 subfamily. As to quaternary structure, monomer.

It is found in the cytoplasm. It catalyses the reaction tRNA(Glu) + L-glutamate + ATP = L-glutamyl-tRNA(Glu) + AMP + diphosphate. Catalyzes the attachment of glutamate to tRNA(Glu) in a two-step reaction: glutamate is first activated by ATP to form Glu-AMP and then transferred to the acceptor end of tRNA(Glu). The chain is Glutamate--tRNA ligase 2 from Fervidobacterium nodosum (strain ATCC 35602 / DSM 5306 / Rt17-B1).